Reading from the N-terminus, the 889-residue chain is A disintegrin and metalloproteinase with thrombospondin motifs 8 (889 aa).

The N-terminal stretch at M1 to G26 is a signal peptide. Residues A27–R213 constitute a propeptide that is removed on maturation. The tract at residues Q138–R210 is disordered. A compositionally biased stretch (basic and acidic residues) spans E173–Q183. Residues E184–G197 are compositionally biased toward acidic residues. The region spanning R219–P429 is the Peptidase M12B domain. 11 disulfides stabilise this stretch: C294–C347, C323–C329, C341–C424, C379–C408, C452–C477, C463–C486, C472–C507, C501–C512, C538–C575, C542–C580, and C553–C565. An N-linked (GlcNAc...) asparagine glycan is attached at N344. H363 is a binding site for Zn(2+). E364 is an active-site residue. H367 and H373 together coordinate Zn(2+). Residues N400, N465, and N490 are each glycosylated (N-linked (GlcNAc...) asparagine). The Disintegrin domain occupies G438–A525. The 56-residue stretch at D526–P581 folds into the TSP type-1 1 domain. A glycan (N-linked (GlcNAc...) asparagine) is linked at N599. The spacer stretch occupies residues R690–L831. Positions H833 to P888 constitute a TSP type-1 2 domain.

It depends on Zn(2+) as a cofactor. In terms of processing, the precursor is cleaved by a furin endopeptidase. Post-translationally, glycosylated. Can be O-fucosylated by POFUT2 on a serine or a threonine residue found within the consensus sequence C1-X(2)-(S/T)-C2-G of the TSP type-1 repeat domains where C1 and C2 are the first and second cysteine residue of the repeat, respectively. Fucosylated repeats can then be further glycosylated by the addition of a beta-1,3-glucose residue by the glucosyltransferase, B3GALTL. Fucosylation mediates the efficient secretion of ADAMTS family members. Can also be C-glycosylated with one or two mannose molecules on tryptophan residues within the consensus sequence W-X-X-W of the TPRs, and N-glycosylated. These other glycosylations can also facilitate secretion. Highly expressed in adult and fetal lung, lower expression in brain, placenta, heart, stomach and fetal brain and kidney.

The protein resides in the secreted. The protein localises to the extracellular space. It localises to the extracellular matrix. In terms of biological role, has anti-angiogenic properties. The chain is A disintegrin and metalloproteinase with thrombospondin motifs 8 (ADAMTS8) from Homo sapiens (Human).